Here is a 636-residue protein sequence, read N- to C-terminus: 1-deoxy-D-xylulose-5-phosphate synthase (636 aa).

Thiamine diphosphate is bound by residues H72 and G113–A115. Residue D144 coordinates Mg(2+). Thiamine diphosphate-binding positions include G145–S146, N174, Y287, and E370. N174 is a binding site for Mg(2+).

Belongs to the transketolase family. DXPS subfamily. In terms of assembly, homodimer. Requires Mg(2+) as cofactor. The cofactor is thiamine diphosphate.

The enzyme catalyses D-glyceraldehyde 3-phosphate + pyruvate + H(+) = 1-deoxy-D-xylulose 5-phosphate + CO2. Its pathway is metabolic intermediate biosynthesis; 1-deoxy-D-xylulose 5-phosphate biosynthesis; 1-deoxy-D-xylulose 5-phosphate from D-glyceraldehyde 3-phosphate and pyruvate: step 1/1. Catalyzes the acyloin condensation reaction between C atoms 2 and 3 of pyruvate and glyceraldehyde 3-phosphate to yield 1-deoxy-D-xylulose-5-phosphate (DXP). In Synechococcus elongatus (strain ATCC 33912 / PCC 7942 / FACHB-805) (Anacystis nidulans R2), this protein is 1-deoxy-D-xylulose-5-phosphate synthase.